The primary structure comprises 294 residues: 4-hydroxy-tetrahydrodipicolinate synthase (294 aa).

T45 lines the pyruvate pocket. The active-site Proton donor/acceptor is Y133. Catalysis depends on K162, which acts as the Schiff-base intermediate with substrate. Residue I204 coordinates pyruvate.

It belongs to the DapA family. In terms of assembly, homotetramer; dimer of dimers.

The protein localises to the cytoplasm. The catalysed reaction is L-aspartate 4-semialdehyde + pyruvate = (2S,4S)-4-hydroxy-2,3,4,5-tetrahydrodipicolinate + H2O + H(+). It participates in amino-acid biosynthesis; L-lysine biosynthesis via DAP pathway; (S)-tetrahydrodipicolinate from L-aspartate: step 3/4. In terms of biological role, catalyzes the condensation of (S)-aspartate-beta-semialdehyde [(S)-ASA] and pyruvate to 4-hydroxy-tetrahydrodipicolinate (HTPA). This is 4-hydroxy-tetrahydrodipicolinate synthase from Bartonella tribocorum (strain CIP 105476 / IBS 506).